A 73-amino-acid chain; its full sequence is DNA-directed RNA polymerase subunit Rpo10 (73 aa).

The Zn(2+) site is built by Cys-7, Cys-10, Cys-44, and Cys-45.

The protein belongs to the archaeal Rpo10/eukaryotic RPB10 RNA polymerase subunit family. As to quaternary structure, part of the RNA polymerase complex. Forms an Rpo3-Rpo10-Rpo11-Rpo12 complex upon coexpression. Requires Zn(2+) as cofactor.

It localises to the cytoplasm. The catalysed reaction is RNA(n) + a ribonucleoside 5'-triphosphate = RNA(n+1) + diphosphate. Its function is as follows. DNA-dependent RNA polymerase (RNAP) catalyzes the transcription of DNA into RNA using the four ribonucleoside triphosphates as substrates. This Methanocaldococcus jannaschii (strain ATCC 43067 / DSM 2661 / JAL-1 / JCM 10045 / NBRC 100440) (Methanococcus jannaschii) protein is DNA-directed RNA polymerase subunit Rpo10.